Here is a 248-residue protein sequence, read N- to C-terminus: Putative imidazole glycerol phosphate synthase subunit hisF2 (248 aa).

Aspartate 129 is a catalytic residue.

This sequence belongs to the HisA/HisF family. In terms of assembly, heterodimer of HisH and HisF.

It is found in the cytoplasm. The enzyme catalyses 5-[(5-phospho-1-deoxy-D-ribulos-1-ylimino)methylamino]-1-(5-phospho-beta-D-ribosyl)imidazole-4-carboxamide + L-glutamine = D-erythro-1-(imidazol-4-yl)glycerol 3-phosphate + 5-amino-1-(5-phospho-beta-D-ribosyl)imidazole-4-carboxamide + L-glutamate + H(+). It participates in amino-acid biosynthesis; L-histidine biosynthesis; L-histidine from 5-phospho-alpha-D-ribose 1-diphosphate: step 5/9. Its function is as follows. IGPS catalyzes the conversion of PRFAR and glutamine to IGP, AICAR and glutamate. The HisF subunit catalyzes the cyclization activity that produces IGP and AICAR from PRFAR using the ammonia provided by the HisH subunit. The protein is Putative imidazole glycerol phosphate synthase subunit hisF2 (hisF2) of Campylobacter jejuni subsp. jejuni serotype O:2 (strain ATCC 700819 / NCTC 11168).